The following is a 445-amino-acid chain: Maltoporin 2 (445 aa).

The N-terminal stretch at 1 to 25 (MKMKAKWLPIAAAVTAALASQAAFA) is a signal peptide.

The protein belongs to the porin LamB (TC 1.B.3) family. As to quaternary structure, homotrimer formed of three 18-stranded antiparallel beta-barrels, containing three independent channels.

Its subcellular location is the cell outer membrane. It carries out the reaction beta-maltose(in) = beta-maltose(out). Functionally, involved in the transport of maltose and maltodextrins. This is Maltoporin 2 from Aeromonas salmonicida (strain A449).